The sequence spans 493 residues: 3-octaprenyl-4-hydroxybenzoate carboxy-lyase (493 aa).

Asn172 is a Mn(2+) binding site. Prenylated FMN contacts are provided by residues 175–177 (IYR), 189–191 (RWL), and 194–195 (RG). Glu238 lines the Mn(2+) pocket. The active-site Proton donor is Asp287.

This sequence belongs to the UbiD family. In terms of assembly, homohexamer. It depends on prenylated FMN as a cofactor. The cofactor is Mn(2+).

The protein resides in the cell membrane. It catalyses the reaction a 4-hydroxy-3-(all-trans-polyprenyl)benzoate + H(+) = a 2-(all-trans-polyprenyl)phenol + CO2. The protein operates within cofactor biosynthesis; ubiquinone biosynthesis. Functionally, catalyzes the decarboxylation of 3-octaprenyl-4-hydroxy benzoate to 2-octaprenylphenol, an intermediate step in ubiquinone biosynthesis. The sequence is that of 3-octaprenyl-4-hydroxybenzoate carboxy-lyase from Shewanella halifaxensis (strain HAW-EB4).